A 289-amino-acid chain; its full sequence is MPSPCTYGDPTFNSRILEAVVADVLGGTEDDGGPSLEEWFDAQTLSDYTNCATDPPMATVHTRENDIKSWTELSENFPDLVRYPESLVETLLDTEHECGHFYDAPDSFQISVTAMFTDRCKCQFCDPNFQARSLSRALLGPLPESGDDAEWMEQAYTPDAELFVNEPTDDPIPTTDCKRPIQPTWSVDVYSKQVDSDWGLSDSTNVTVCSASSSLLPAGRGGIYFMCPRPEGIERVCLQVGAKIRSGAPNSGTITNLPGGTGYGTEWSDDGYETQWSDGPYSIPSGLSD.

Residues 268 to 289 (SDDGYETQWSDGPYSIPSGLSD) are disordered.

This is an uncharacterized protein from Zea mays (Maize).